The sequence spans 471 residues: Putative multidrug resistance protein MdtD (471 aa).

Topologically, residues 1–11 are periplasmic; it reads MTDLPDSTRWQ. A helical transmembrane segment spans residues 12–32; the sequence is LWIVAFGFFMQSLDTTIVNTA. The Cytoplasmic portion of the chain corresponds to 33 to 48; the sequence is LPSMAQSLGESPLHMH. Residues 49–69 traverse the membrane as a helical segment; the sequence is MVIVSYVLTVAVMLPASGWLA. The Periplasmic portion of the chain corresponds to 70–76; sequence DKVGVRN. The helical transmembrane segment at 77–97 threads the bilayer; sequence IFFTAIVLFTLGSLFCALSGT. Over 98-101 the chain is Cytoplasmic; sequence LNEL. Residues 102–124 traverse the membrane as a helical segment; it reads LLARALQGVGGAMMVPVGRLTVM. At 125 to 137 the chain is on the periplasmic side; that stretch reads KIVPREQYMAAMT. Residues 138 to 158 traverse the membrane as a helical segment; sequence FVTLPGQVGPLLGPALGGLLV. At 159-164 the chain is on the cytoplasmic side; the sequence is EYASWH. A helical membrane pass occupies residues 165 to 185; it reads WIFLINIPVGIIGAIATLMLM. The Periplasmic portion of the chain corresponds to 186–196; that stretch reads PNYTMQTRRFD. The chain crosses the membrane as a helical span at residues 197-217; sequence LSGFLLLAVGMAVLTLALDGS. Residues 218-224 lie on the Cytoplasmic side of the membrane; sequence KGTGLSP. A helical transmembrane segment spans residues 225–245; that stretch reads LAITGLVAVGVVALVLYLLHA. Topologically, residues 246–262 are periplasmic; sequence RNNNRALFSLKLFRTRT. Residues 263–283 form a helical membrane-spanning segment; sequence FSLGLAGSFAGRIGSGMLPFM. The Cytoplasmic segment spans residues 284 to 285; it reads TP. Residues 286-306 traverse the membrane as a helical segment; it reads VFLQIGLGFSPFHAGLMMIPM. The Periplasmic portion of the chain corresponds to 307 to 341; it reads VLGSMGMKRIVVQVVNRFGYRRVLVATTLGLSLVT. A helical membrane pass occupies residues 342–362; the sequence is LLFMTTALLGWYYVLPFVLFL. Topologically, residues 363–395 are cytoplasmic; the sequence is QGMVNSTRFSSMNTLTLKDLPDNLASSGNSLLS. The helical transmembrane segment at 396–416 threads the bilayer; it reads MIMQLSMSIGVTIAGLLLGLF. Residues 417–430 lie on the Periplasmic side of the membrane; the sequence is GSQHVSVDSSTTQT. Residues 431–451 traverse the membrane as a helical segment; the sequence is VFMYTWLSMAFIIALPAFIFA. The Cytoplasmic portion of the chain corresponds to 452–471; it reads RVPNDTHQNVAISRRKRSAQ.

Belongs to the major facilitator superfamily. TCR/Tet family.

It localises to the cell inner membrane. The polypeptide is Putative multidrug resistance protein MdtD (Escherichia coli O157:H7).